A 273-amino-acid chain; its full sequence is tRNA (guanine-N(7)-)-methyltransferase (273 aa).

The interval 1–32 (MSATAKKSAAQLQREEEEARKKLKRLSKQGGV) is disordered. S-adenosyl-L-methionine-binding positions include glycine 88, 111–112 (EI), 150–151 (NC), and cysteine 170. Aspartate 173 is an active-site residue. Residue 248–250 (TEE) coordinates S-adenosyl-L-methionine.

Belongs to the class I-like SAM-binding methyltransferase superfamily. TrmB family. In terms of assembly, forms a complex with trm82.

It is found in the nucleus. It carries out the reaction guanosine(46) in tRNA + S-adenosyl-L-methionine = N(7)-methylguanosine(46) in tRNA + S-adenosyl-L-homocysteine. The protein operates within tRNA modification; N(7)-methylguanine-tRNA biosynthesis. Functionally, catalyzes the formation of N(7)-methylguanine at position 46 (m7G46) in tRNA. The sequence is that of tRNA (guanine-N(7)-)-methyltransferase (trm8) from Schizosaccharomyces pombe (strain 972 / ATCC 24843) (Fission yeast).